The primary structure comprises 266 residues: Putative carbamate hydrolase RutD (266 aa).

Positions 14 to 115 constitute an AB hydrolase-1 domain; that stretch reads PVVVLISGLG…TMLVSVNGWL (102 aa).

Belongs to the AB hydrolase superfamily. Hydrolase RutD family.

The catalysed reaction is carbamate + 2 H(+) = NH4(+) + CO2. Involved in pyrimidine catabolism. May facilitate the hydrolysis of carbamate, a reaction that can also occur spontaneously. The chain is Putative carbamate hydrolase RutD from Shigella flexneri serotype 5b (strain 8401).